Reading from the N-terminus, the 1957-residue chain is [F-actin]-monooxygenase MICAL2 (1957 aa).

Residues 2-494 (GENEDEKQAQ…KHLYITKELE (493 aa)) are monooxygenase domain. FAD contacts are provided by residues cysteine 97, 116-118 (EKR), 123-125 (RNN), phenylalanine 183, tyrosine 298, and aspartate 398. Residues 516–619 (DIRPSKLLTW…MVMYLSKFYE (104 aa)) form the Calponin-homology (CH) domain. Serine 631 is subject to Phosphoserine. The Nuclear localization signal motif lies at 660 to 681 (RKRTPRVDGQTGENDMNKRRRK). Disordered regions lie at residues 660 to 714 (RKRT…NQNK) and 886 to 942 (QNKL…HPSH). A compositionally biased stretch (polar residues) spans 687-714 (DEPSNFSSRSLGSNQECGSSKEGGNQNK). Residues 899–910 (PPSPPSRLPSPD) show a composition bias toward pro residues. Low complexity predominate over residues 911-925 (PAASSSPSTVDSASP). The LIM zinc-binding domain maps to 1000 to 1062 (DTCYFCKKRV…KPHFIHCKTN (63 aa)). Zn(2+) contacts are provided by cysteine 1002, cysteine 1005, histidine 1023, cysteine 1026, cysteine 1029, cysteine 1032, cysteine 1052, and histidine 1055. Disordered stretches follow at residues 1070 to 1143 (AELK…PSEW), 1168 to 1243 (SEDS…TPSK), 1258 to 1345 (VNKR…LYLP), 1361 to 1431 (GEDG…EGGP), 1467 to 1626 (KAGE…SPPC), and 1675 to 1779 (ESRQ…KEKK). Basic and acidic residues predominate over residues 1185–1195 (SHTEPCEEKPW). Over residues 1232–1243 (RANSFQSPTPSK) the composition is skewed to polar residues. Low complexity predominate over residues 1275–1294 (LPSSSSHSSSPPSSSSTSVS). Residues 1302-1316 (SPPQMTASEPLSQVS) show a composition bias toward polar residues. An interaction with MAPK1 region spans residues 1324–1363 (TPNFRRRAVAQGAPREIPLYLPHHPKPEWAEYCLVSPGED). Basic and acidic residues-rich tracts occupy residues 1388–1402 (SNHR…KDRS) and 1413–1431 (GEDR…EGGP). Low complexity predominate over residues 1485-1496 (VLKPVRPLLLPR). Residues 1552 to 1562 (GGKKAWAKQES) show a composition bias toward basic and acidic residues. Polar residues predominate over residues 1570-1579 (CTRSFSLRKT). Serine 1688 carries the phosphoserine modification. The span at 1718–1733 (APPPPPPPPPPPPPPT) shows a compositional bias: pro residues. The span at 1751 to 1762 (ASSSASSTSSSS) shows a compositional bias: low complexity. Residues 1796–1945 (KQEELKRLYK…EKAEDQHFES (150 aa)) enclose the bMERB domain.

The protein belongs to the Mical family. In terms of assembly, interacts with PLXNA4. Interacts with RAB1B. Interacts with MAPK1/ERK2. Interacts with RAB35, RAB8A, RAB10, RAB13 and RAB15 (in their GTP-bound forms); binding to RAB35 is of low affinity compared to other Rab proteins; at least in case of RAB8A may bind 2 molecules of RAB8A simultaneously through a high and a low affinity binding site, respectively. May interact with MAPK1/ERK2. Interacts with CORO1C; this interaction recruits MICAL2 to the actin filaments. Requires FAD as cofactor.

It localises to the nucleus. Its subcellular location is the cytoplasm. It carries out the reaction L-methionyl-[F-actin] + NADPH + O2 + H(+) = L-methionyl-(R)-S-oxide-[F-actin] + NADP(+) + H2O. Specifically inhibited by CCG-1423, a small molecule inhibitor of SRF:MKL1/MRTF-A-dependent transcription. Functionally, methionine monooxygenase that promotes depolymerization of F-actin by mediating oxidation of residues 'Met-44' and 'Met-47' on actin to form methionine-sulfoxide, resulting in actin filament disassembly and preventing repolymerization. Regulates the disassembly of branched actin networks also by oxidizing ARP3B-containing ARP2/3 complexes leading to ARP3B dissociation from the network. Acts as a key regulator of the SRF signaling pathway elicited by nerve growth factor and serum: mediates oxidation and subsequent depolymerization of nuclear actin, leading to increase MKL1/MRTF-A presence in the nucleus and promote SRF:MKL1/MRTF-A-dependent gene transcription. Does not activate SRF:MKL1/MRTF-A through RhoA. This Homo sapiens (Human) protein is [F-actin]-monooxygenase MICAL2.